Consider the following 489-residue polypeptide: Zinc finger protein 772 (489 aa).

One can recognise a KRAB domain in the interval 27–98 (VNFEDVFVYF…DWVDMTLAVA (72 aa)). 10 consecutive C2H2-type zinc fingers follow at residues 144–166 (YPCGTCGLVLKDILHLAEHQETH), 172–194 (YMCVLCGKQFCFSANLHQHQKQH), 266–288 (YKCSECGKTFSRKDSLVQHQRVH), 294–316 (YECGECGKTFSRKPILAQHQRIH), 322–344 (YECGICGKVFNHSSNLIVHQRVH), 350–372 (YKCSECGKAYSHKSTLVQHESIH), 378–400 (YECSECGKYFGHKYRLIKHWSVH), 406–428 (YECIACGKFFSQSSDLIAHQRVH), 434–456 (YVCSECGKAFSHKHVLVQHHRIH), and 462–484 (YKCSECGKAFRQRASLIRHWKIH).

The protein belongs to the krueppel C2H2-type zinc-finger protein family.

Its subcellular location is the nucleus. Functionally, may be involved in transcriptional regulation. The protein is Zinc finger protein 772 (ZNF772) of Homo sapiens (Human).